The sequence spans 546 residues: Chaperonin GroEL (546 aa).

Residues 29-32, K50, 86-90, G414, and D492 each bind ATP; these read TMGP and DGTTT.

It belongs to the chaperonin (HSP60) family. As to quaternary structure, forms a cylinder of 14 subunits composed of two heptameric rings stacked back-to-back. Interacts with the co-chaperonin GroES.

It localises to the cytoplasm. The enzyme catalyses ATP + H2O + a folded polypeptide = ADP + phosphate + an unfolded polypeptide.. Functionally, together with its co-chaperonin GroES, plays an essential role in assisting protein folding. The GroEL-GroES system forms a nano-cage that allows encapsulation of the non-native substrate proteins and provides a physical environment optimized to promote and accelerate protein folding. The chain is Chaperonin GroEL from Helicobacter pylori (strain ATCC 700392 / 26695) (Campylobacter pylori).